Reading from the N-terminus, the 1211-residue chain is RNA helicase Mov10l1 (1211 aa).

2 disordered regions span residues 340-385 and 674-710; these read KENS…GENG and WNHAQDTKSSGQSTSKKNRKTMTDQAEHGTEERRVGD. Composition is skewed to polar residues over residues 345-372 and 674-688; these read DENINSLNSHTKNKTSQMSESSLVNNRG and WNHAQDTKSSGQSTS. Basic and acidic residues predominate over residues 694–710; it reads TMTDQAEHGTEERRVGD. An ATP-binding site is contributed by 770-777; the sequence is GPPGTGKT. The short motif at 886–889 is the DEAG box element; the sequence is DEAG. The disordered stretch occupies residues 1192–1211; sequence DPSYPVVPESTGPEKHQEPS.

It belongs to the DNA2/NAM7 helicase family. SDE3 subfamily. As to quaternary structure, interacts with PIWIL1. Interacts with PIWIL2. Interacts with PIWIL4. Interacts with HSPA2. Interacts with PLD6. As to expression, specifically expressed in testis.

Its subcellular location is the cytoplasm. It carries out the reaction ATP + H2O = ADP + phosphate + H(+). Functionally, ATP-dependent RNA helicase required during spermatogenesis to repress transposable elements and prevent their mobilization, which is essential for germline integrity. Acts via the piRNA metabolic process, which mediates the repression of transposable elements during meiosis by forming complexes composed of piRNAs and Piwi proteins and governs the methylation and subsequent repression of transposons. Involved in the primary piRNA metabolic process. Specifically binds to piRNA precursors and promotes the generation of intermediate piRNA processing fragments that are subsequently loaded to Piwi proteins. Acts via its ATP-dependent RNA helicase activity: displays 5'-3' RNA unwinding activity and probably mediates unwinding and funneling of single-stranded piRNA precursor transcripts to the endonuclease that catalyzes the first cleavage step of piRNA processing to generate piRNA intermediate fragments that are subsequently loaded to Piwi proteins. The protein is RNA helicase Mov10l1 of Homo sapiens (Human).